The following is a 412-amino-acid chain: Citrate synthase (412 aa).

Residues His305 and Asp364 contribute to the active site.

Belongs to the citrate synthase family.

The catalysed reaction is oxaloacetate + acetyl-CoA + H2O = citrate + CoA + H(+). It participates in carbohydrate metabolism; tricarboxylic acid cycle; isocitrate from oxaloacetate: step 1/2. This chain is Citrate synthase (gltA), found in Rickettsia bellii.